A 352-amino-acid polypeptide reads, in one-letter code: Protein RecA (352 aa).

68–75 (GPESSGKT) lines the ATP pocket.

It belongs to the RecA family.

The protein resides in the cytoplasm. Its function is as follows. Can catalyze the hydrolysis of ATP in the presence of single-stranded DNA, the ATP-dependent uptake of single-stranded DNA by duplex DNA, and the ATP-dependent hybridization of homologous single-stranded DNAs. It interacts with LexA causing its activation and leading to its autocatalytic cleavage. This chain is Protein RecA, found in Clostridium perfringens (strain ATCC 13124 / DSM 756 / JCM 1290 / NCIMB 6125 / NCTC 8237 / Type A).